The following is a 596-amino-acid chain: (E)-beta-ocimene synthase, chloroplastic (596 aa).

Residues 1-35 constitute a chloroplast transit peptide; the sequence is MAITHYQMASFQSSFHFCMLRKTLRQKSSLHFAKR. 5 residues coordinate (2E)-geranyl diphosphate: R307, D344, D348, R485, and N488. Mg(2+)-binding residues include D344 and D348. The DDXXD motif motif lies at 344-348; the sequence is DDIYD. Positions 488, 492, and 496 each coordinate Mg(2+).

This sequence belongs to the terpene synthase family. Tpsb subfamily. The cofactor is Mg(2+). It depends on Mn(2+) as a cofactor. As to expression, highly expressed in leaves, stems and disk florets. Detected in roots.

The protein localises to the plastid. It is found in the chloroplast. It carries out the reaction (2E)-geranyl diphosphate = (E)-beta-ocimene + diphosphate. The protein operates within secondary metabolite biosynthesis; terpenoid biosynthesis. Monoterpene synthase involved in the biosynthesis of (E)-beta-ocimene as the major product and trace amounts of (Z)-beta-ocimene. Can only accept geranyl diphosphate as substrate. This Matricaria chamomilla var. recutita (German chamomile) protein is (E)-beta-ocimene synthase, chloroplastic.